A 694-amino-acid chain; its full sequence is PTS system fructose-specific EIIABC component (694 aa).

The region spanning 4-149 (PLLSAELFFN…NGLINLIDSF (146 aa)) is the PTS EIIA type-2 domain. His68 acts as the Tele-phosphohistidine intermediate; for EIIA activity in catalysis. At His68 the chain carries Phosphohistidine; by HPr. Positions 179–275 (FVAVTACPTG…PQTVYDQVVK (97 aa)) constitute a PTS EIIB type-2 domain. Cys185 serves as the catalytic Phosphocysteine intermediate; for EIIB activity. A Phosphocysteine; by EIIA modification is found at Cys185. The 378-residue stretch at 310–687 (IYRAILSGVS…NLLVVRKKTK (378 aa)) folds into the PTS EIIC type-2 domain. The next 10 helical transmembrane spans lie at 318-338 (VSYM…AFLI), 364-384 (GGLS…FALV), 390-410 (LPGF…IDIV), 422-442 (VSSG…LIIV), 461-481 (ILFI…VINI), 502-522 (LAPL…GGPV), 542-562 (VAMA…AIAA), 576-596 (AAYA…IPFV), 602-622 (IMLA…GAFA), and 655-675 (GVGL…GIII).

The protein localises to the cell membrane. It catalyses the reaction D-fructose(out) + N(pros)-phospho-L-histidyl-[protein] = D-fructose 1-phosphate(in) + L-histidyl-[protein]. In terms of biological role, the phosphoenolpyruvate-dependent sugar phosphotransferase system (sugar PTS), a major carbohydrate active transport system, catalyzes the phosphorylation of incoming sugar substrates concomitantly with their translocation across the cell membrane. This system is involved in fructose transport. The chain is PTS system fructose-specific EIIABC component from Mycoplasma pneumoniae (strain ATCC 29342 / M129 / Subtype 1) (Mycoplasmoides pneumoniae).